The primary structure comprises 235 residues: 15,16-dihydrobiliverdin:ferredoxin oxidoreductase (235 aa).

It belongs to the HY2 family.

It carries out the reaction 15,16-dihydrobiliverdin + oxidized 2[4Fe-4S]-[ferredoxin] = biliverdin IXalpha + reduced 2[4Fe-4S]-[ferredoxin] + 2 H(+). In terms of biological role, catalyzes the two-electron reduction of biliverdin IX-alpha at the C15 methine bridge. This chain is 15,16-dihydrobiliverdin:ferredoxin oxidoreductase (pebA), found in Parasynechococcus marenigrum (strain WH8102).